Reading from the N-terminus, the 307-residue chain is MEGVVLLHKPKGMTSHDCVFKLRKILREKRIGHTGTLDPDVTGVLPICVGRATKIAQFLTSETKTYEGEVTLGFSTTTEDASGEVVEKQDVNRTITRKEIEAVLAELTGTLEQVPPMYSAVKVNGKKLYEYARAGQEVKRPVRIITIHEFTLLDNRETFEGANISFRFRVTCSKGTYVRTLAVMIGEKLGFPAHMSDLVRTASGEFQLHDCVSFEEIEENMQNGTVESVFISIDEALSKFPKIVVDEKQAEKIKNGMFLKNEIQAETPFITVFDRNNHCLAIYEHHPKRPGMLKPMKVLVNNQELKL.

Aspartate 38 serves as the catalytic Nucleophile.

The protein belongs to the pseudouridine synthase TruB family. Type 1 subfamily.

The enzyme catalyses uridine(55) in tRNA = pseudouridine(55) in tRNA. Its function is as follows. Responsible for synthesis of pseudouridine from uracil-55 in the psi GC loop of transfer RNAs. The polypeptide is tRNA pseudouridine synthase B (Bacillus cytotoxicus (strain DSM 22905 / CIP 110041 / 391-98 / NVH 391-98)).